We begin with the raw amino-acid sequence, 396 residues long: Subtilisin-like protease 5 (396 aa).

A signal peptide spans 1–20 (MTGFFTILSFSLAALSVTNA). Positions 21–116 (AQILSVPKGA…VEPDAIISQH (96 aa)) are excised as a propeptide. One can recognise an Inhibitor I9 domain in the interval 37-113 (YIVVMKDDTS…VAFVEPDAII (77 aa)). A glycan (N-linked (GlcNAc...) asparagine) is linked at N63. Residues 125–396 (PWGLSRLSNR…SRLLYNGSGR (272 aa)) enclose the Peptidase S8 domain. Active-site charge relay system residues include D156 and H187. N-linked (GlcNAc...) asparagine glycosylation is found at N230 and N248. The active-site Charge relay system is the S342. Positions 376-389 (PTIRNPGPDTTSRL) are enriched in polar residues. The tract at residues 376–396 (PTIRNPGPDTTSRLLYNGSGR) is disordered. N-linked (GlcNAc...) asparagine glycosylation is present at N392.

This sequence belongs to the peptidase S8 family.

The protein resides in the secreted. Its function is as follows. Secreted subtilisin-like serine protease with keratinolytic activity that contributes to pathogenicity. The protein is Subtilisin-like protease 5 (SUB5) of Trichophyton verrucosum (Cattle ringworm fungus).